Here is a 282-residue protein sequence, read N- to C-terminus: Putative quercetin 2,3-dioxygenase VC_A0969 (282 aa).

Residues 1-21 form a disordered region; that stretch reads MTKDREIRQTVPAQPTSDGDG. 4 residues coordinate a divalent metal cation: His-59, His-61, His-103, and Glu-105.

It belongs to the pirin family. Requires a divalent metal cation as cofactor.

It catalyses the reaction quercetin + O2 = 2-(3,4-dihydroxybenzoyloxy)-4,6-dihydroxybenzoate + CO. It participates in flavonoid metabolism; quercetin degradation. Putative quercetin 2,3-dioxygenase. This Vibrio cholerae serotype O1 (strain ATCC 39315 / El Tor Inaba N16961) protein is Putative quercetin 2,3-dioxygenase VC_A0969.